The primary structure comprises 249 residues: Segregation and condensation protein A (249 aa).

It belongs to the ScpA family. Component of a cohesin-like complex composed of ScpA, ScpB and the Smc homodimer, in which ScpA and ScpB bind to the head domain of Smc. The presence of the three proteins is required for the association of the complex with DNA.

The protein resides in the cytoplasm. Participates in chromosomal partition during cell division. May act via the formation of a condensin-like complex containing Smc and ScpB that pull DNA away from mid-cell into both cell halves. In Listeria innocua serovar 6a (strain ATCC BAA-680 / CLIP 11262), this protein is Segregation and condensation protein A.